Reading from the N-terminus, the 481-residue chain is UDP-glucose 6-dehydrogenase (481 aa).

Residues 16–21, D41, K46, 94–98, 135–136, and E172 each bind NAD(+); these read GAGYVG, VNTPT, and ST. Residues 168 to 172, 227 to 231, R267, and 274 to 280 each bind substrate; these read EFLAE, KLVAN, and QASVGFG. The Nucleophile role is filled by C283. 283–286 provides a ligand contact to NAD(+); sequence CFQK. Substrate is bound at residue 345–346; the sequence is FK. An NAD(+)-binding site is contributed by R353. R447 is a binding site for substrate.

This sequence belongs to the UDP-glucose/GDP-mannose dehydrogenase family. In terms of tissue distribution, expressed in the vulva and in oocytes.

It catalyses the reaction UDP-alpha-D-glucose + 2 NAD(+) + H2O = UDP-alpha-D-glucuronate + 2 NADH + 3 H(+). Its pathway is nucleotide-sugar biosynthesis; UDP-alpha-D-glucuronate biosynthesis; UDP-alpha-D-glucuronate from UDP-alpha-D-glucose: step 1/1. In terms of biological role, involved in the biosynthesis of glycosaminoglycans; hyaluronan, chondroitin sulfate, and heparan sulfate. The chain is UDP-glucose 6-dehydrogenase (sqv-4) from Caenorhabditis elegans.